Consider the following 103-residue polypeptide: Large ribosomal subunit protein bL21 (103 aa).

Belongs to the bacterial ribosomal protein bL21 family. Part of the 50S ribosomal subunit. Contacts protein L20.

Functionally, this protein binds to 23S rRNA in the presence of protein L20. This is Large ribosomal subunit protein bL21 from Ralstonia nicotianae (strain ATCC BAA-1114 / GMI1000) (Ralstonia solanacearum).